The sequence spans 469 residues: MNPNQKIITIGSVSLTIATICFLMQIAILVTTVTLHFKQYECDSPANNQVMPCEPIIIERNITEIVYLTNTTIEKEICPKLVEYRNWSKPQCKITGFAPFSKDNSIRLSAGGDIWVTREPYVSCDPGKCYQFALGQGTTLDNKHSNDTIHDRTPHRTLLMNELGVPFHLGTRQVCIAWSSSSCHDGKAWLHVCVTGYDKNATASFIYDGRLVDSIGSWSKNILRTQESECVCINGTCTVVMTDGSASERADTKILFIEEGKIVHISPLSGSAQHVEECSCYPRYPGVRCVCRDNWKGSNRPIVDINVKDYSIASSYVCSGLVGDTPRKNDRSSSSYCRNPNNEKGNHGVKGWAFDDGNDVWMGRTISEESRSGYETFKVIGGWSTPNSKLQINRQVIVDSDNRSGYSGIFSVEGKSCINRCFYVELIRGREQETRVWWTSNSIVVFCGTSGTYGTGSWPDGADINLMPI.

The Intravirion segment spans residues 1 to 9; the sequence is MNPNQKIIT. Residues 10–30 form a helical membrane-spanning segment; that stretch reads IGSVSLTIATICFLMQIAILV. An involved in apical transport and lipid raft association region spans residues 11–33; the sequence is GSVSLTIATICFLMQIAILVTTV. Over 31–469 the chain is Virion surface; it reads TTVTLHFKQY…DGADINLMPI (439 aa). A hypervariable stalk region region spans residues 36–88; sequence HFKQYECDSPANNQVMPCEPIIIERNITEIVYLTNTTIEKEICPKLVEYRNWS. Asn61, Asn70, and Asn86 each carry an N-linked (GlcNAc...) asparagine; by host glycan. Residues 91–469 form a head of neuraminidase region; that stretch reads QCKITGFAPF…DGADINLMPI (379 aa). 8 cysteine pairs are disulfide-bonded: Cys92–Cys417, Cys124–Cys129, Cys183–Cys230, Cys232–Cys237, Cys278–Cys291, Cys280–Cys289, Cys318–Cys337, and Cys421–Cys447. Residue Arg118 coordinates substrate. N-linked (GlcNAc...) asparagine; by host glycosylation is present at Asn146. Asp151 functions as the Proton donor/acceptor in the catalytic mechanism. Residue Arg152 participates in substrate binding. N-linked (GlcNAc...) asparagine; by host glycans are attached at residues Asn200 and Asn234. 276–277 is a substrate binding site; the sequence is EE. Arg292 serves as a coordination point for substrate. Residues Asp293, Gly297, and Asp324 each contribute to the Ca(2+) site. Arg371 contributes to the substrate binding site. N-linked (GlcNAc...) asparagine; by host glycosylation occurs at Asn402. Tyr406 acts as the Nucleophile in catalysis.

The protein belongs to the glycosyl hydrolase 34 family. As to quaternary structure, homotetramer. The cofactor is Ca(2+). Post-translationally, N-glycosylated.

It localises to the virion membrane. It is found in the host apical cell membrane. The enzyme catalyses Hydrolysis of alpha-(2-&gt;3)-, alpha-(2-&gt;6)-, alpha-(2-&gt;8)- glycosidic linkages of terminal sialic acid residues in oligosaccharides, glycoproteins, glycolipids, colominic acid and synthetic substrates.. Inhibited by the neuraminidase inhibitors zanamivir (Relenza) and oseltamivir (Tamiflu). These drugs interfere with the release of progeny virus from infected cells and are effective against all influenza strains. Resistance to neuraminidase inhibitors is quite rare. Functionally, catalyzes the removal of terminal sialic acid residues from viral and cellular glycoconjugates. Cleaves off the terminal sialic acids on the glycosylated HA during virus budding to facilitate virus release. Additionally helps virus spread through the circulation by further removing sialic acids from the cell surface. These cleavages prevent self-aggregation and ensure the efficient spread of the progeny virus from cell to cell. Otherwise, infection would be limited to one round of replication. Described as a receptor-destroying enzyme because it cleaves a terminal sialic acid from the cellular receptors. May facilitate viral invasion of the upper airways by cleaving the sialic acid moieties on the mucin of the airway epithelial cells. Likely to plays a role in the budding process through its association with lipid rafts during intracellular transport. May additionally display a raft-association independent effect on budding. Plays a role in the determination of host range restriction on replication and virulence. Sialidase activity in late endosome/lysosome traffic seems to enhance virus replication. This chain is Neuraminidase, found in Aves (whales).